The sequence spans 427 residues: Glutamate-1-semialdehyde 2,1-aminomutase (427 aa).

The residue at position 269 (K269) is an N6-(pyridoxal phosphate)lysine.

This sequence belongs to the class-III pyridoxal-phosphate-dependent aminotransferase family. HemL subfamily. As to quaternary structure, homodimer. The cofactor is pyridoxal 5'-phosphate.

Its subcellular location is the cytoplasm. It carries out the reaction (S)-4-amino-5-oxopentanoate = 5-aminolevulinate. It participates in porphyrin-containing compound metabolism; protoporphyrin-IX biosynthesis; 5-aminolevulinate from L-glutamyl-tRNA(Glu): step 2/2. In Thermus thermophilus (strain ATCC BAA-163 / DSM 7039 / HB27), this protein is Glutamate-1-semialdehyde 2,1-aminomutase.